Here is a 76-residue protein sequence, read N- to C-terminus: Dermaseptin-SP2 (76 aa).

Residues 1–22 (MAFLKKSLFLVLFLGLVSLSIC) form the signal peptide. Residues 23 to 45 (EEEKRENEDEEEQEDEEQSEEKR) constitute a propeptide that is removed on maturation. Residues 24–44 (EEKRENEDEEEQEDEEQSEEK) form a disordered region. Over residues 30-41 (EDEEEQEDEEQS) the composition is skewed to acidic residues. Gln-73 is subject to Glutamine amide. A propeptide spanning residues 74 to 76 (GEQ) is cleaved from the precursor.

In terms of tissue distribution, expressed by the skin glands.

It localises to the secreted. It is found in the target cell membrane. Antimicrobial peptide with activity against Gram-positive and Gram-negative bacteria and fungi. Has been tested against E.coli (MIC=2.68-8 uM), S.aureus (ATCC 25923, MIC=2.68-8 uM), S.aureus (ATCC oxacillin resistant, MIC=2.68 uM), K.pneumoniae (MIC=10.71 uM) and C.albicans (MIC=10.71-32 uM). Probably acts by disturbing membrane functions with its alpha-helical amphipathic structure. May penetrate bacterial membranes, but stay at the mammalian membrane surface. Shows a very weak hemolytic activity. This Agalychnis spurrelli (Gliding leaf frog) protein is Dermaseptin-SP2.